Reading from the N-terminus, the 481-residue chain is Probable glycine dehydrogenase (decarboxylating) subunit 2 (481 aa).

The segment at 1–23 (MVIFEKTRGKNSPSVMPSKKGDV) is disordered. N6-(pyridoxal phosphate)lysine is present on lysine 263.

The protein belongs to the GcvP family. C-terminal subunit subfamily. In terms of assembly, the glycine cleavage system is composed of four proteins: P, T, L and H. In this organism, the P 'protein' is a heterodimer of two subunits. Requires pyridoxal 5'-phosphate as cofactor.

The catalysed reaction is N(6)-[(R)-lipoyl]-L-lysyl-[glycine-cleavage complex H protein] + glycine + H(+) = N(6)-[(R)-S(8)-aminomethyldihydrolipoyl]-L-lysyl-[glycine-cleavage complex H protein] + CO2. Functionally, the glycine cleavage system catalyzes the degradation of glycine. The P protein binds the alpha-amino group of glycine through its pyridoxal phosphate cofactor; CO(2) is released and the remaining methylamine moiety is then transferred to the lipoamide cofactor of the H protein. This is Probable glycine dehydrogenase (decarboxylating) subunit 2 from Francisella philomiragia subsp. philomiragia (strain ATCC 25017 / CCUG 19701 / FSC 153 / O#319-036).